The following is a 556-amino-acid chain: PPE family protein PPE2 (556 aa).

A PPE region spans residues 8-164 (ASPPEVHSAL…ASYQAVSTAA (157 aa)). The SH3-like stretch occupies residues 201–256 (QKIGYTDFYNNVIQPFINWLTNLPFLQAMFSGFDPWLPSLGNPLTFLSPANIAFAL). A leucine zipper motif region spans residues 319 to 340 (LEQTLALLPAALPLLAAPLAPL). Disordered stretches follow at residues 385–418 (TPTP…PPVT) and 443–556 (GTGV…TRVE). Pro residues predominate over residues 400–417 (PTPPLGPPPPPVTAPPPV). Over residues 456–471 (AEAPASAAAPEEQVQP) the composition is skewed to low complexity. The span at 472 to 481 (QRRRRPKIKQ) shows a compositional bias: basic residues. The Nuclear localization signal signature appears at 473-481 (RRRRPKIKQ).

It belongs to the mycobacterial PPE family.

It is found in the secreted. Its subcellular location is the host cytoplasm. The protein localises to the host nucleus. Functionally, inhibits nitric oxide (NO) production in activated macrophages. Acts by inhibiting expression of the host inducible nitric oxide synthase (iNOS). PPE2 is translocated into the host macrophage nucleus, where it interacts with a GATA-binding site overlapping with the TATA box of NOS2 (iNOS) promoter, and strongly inhibits NOS2 gene transcription. Reduction in NO production in turn facilitates intracellular survival of the bacilli inside the macrophage. In addition, disrupts the assembly of NADPH oxidase complex, which inhibits NADPH oxidase-mediated reactive oxygen species (ROS) generation in macrophages and favors M.tuberculosis survival. Acts by interacting with NCF2, the cytosolic subunit of NADPH oxidase, and preventing translocation of NCF2 and NCF1 to the membrane, which causes a reduction of the functional assembly of NADPH oxidase complex and a decrease in NADPH oxidase activity. The sequence is that of PPE family protein PPE2 (PPE2) from Mycobacterium tuberculosis (strain CDC 1551 / Oshkosh).